The chain runs to 230 residues: Homeobox protein Hox-B5 (230 aa).

The interval 1–135 (GGGGGNVSGS…GAAGTDGQSP (135 aa)) is disordered. Polar residues predominate over residues 49 to 65 (FPGQESSRFRANQNCPL). A compositionally biased stretch (low complexity) spans 87–103 (ATSSAHFTETEETSASS). The short motif at 137-142 (IFPWMR) is the Antp-type hexapeptide element. Positions 155–214 (GKRARTAYTRYQTLELEKEFHFNRYLTRRRRIEIAHTLCLSERQIKIWFQNRRMKWKKDN) form a DNA-binding region, homeobox.

Belongs to the Antp homeobox family.

Its subcellular location is the nucleus. Functionally, sequence-specific transcription factor which is part of a developmental regulatory system that provides cells with specific positional identities on the anterior-posterior axis. This chain is Homeobox protein Hox-B5 (hoxb5), found in Xenopus laevis (African clawed frog).